A 350-amino-acid chain; its full sequence is Phosphoribosylformylglycinamidine cyclo-ligase (350 aa).

This sequence belongs to the AIR synthase family.

It localises to the cytoplasm. It carries out the reaction 2-formamido-N(1)-(5-O-phospho-beta-D-ribosyl)acetamidine + ATP = 5-amino-1-(5-phospho-beta-D-ribosyl)imidazole + ADP + phosphate + H(+). The protein operates within purine metabolism; IMP biosynthesis via de novo pathway; 5-amino-1-(5-phospho-D-ribosyl)imidazole from N(2)-formyl-N(1)-(5-phospho-D-ribosyl)glycinamide: step 2/2. This chain is Phosphoribosylformylglycinamidine cyclo-ligase, found in Cupriavidus taiwanensis (strain DSM 17343 / BCRC 17206 / CCUG 44338 / CIP 107171 / LMG 19424 / R1) (Ralstonia taiwanensis (strain LMG 19424)).